Consider the following 334-residue polypeptide: Serine/Arginine-related protein 53 (334 aa).

Basic and acidic residues predominate over residues 1–13; the sequence is MGRRSSDTEEESR. 3 disordered regions span residues 1 to 173, 201 to 222, and 241 to 290; these read MGRR…IKAG, LKAK…QATL, and VQQT…SIPT. The segment covering 14–24 has biased composition (basic residues); it reads SKRKKKHRRRS. Over residues 44 to 62 the composition is skewed to basic and acidic residues; it reads PRSESRSWSRDRQPRSHSY. A compositionally biased stretch (basic residues) spans 78–118; it reads SRRKRSRSRSRGRGKSYRVQRSRSKSRTRRSRSRPRPRSHS. 3 stretches are compositionally biased toward basic and acidic residues: residues 132-166, 201-218, and 247-262; these read RSRD…KRGD, LKAK…KEED, and SSKD…EVKH. The stretch at 180-234 forms a coiled coil; the sequence is AEQAKARLQLVLEAAAKADEALKAKERNEEEAKRRKEEDQATLGEQVKRVKEIEA.

In terms of assembly, interacts (via Arg/Ser-rich domain) with LUC7L3, RBM39 and RSF1. Phosphorylated.

It localises to the nucleus speckle. The protein localises to the nucleus. It is found in the cytoplasm. Functionally, plays a role in pre-mRNA splicing. Involved in both constitutive and alternative pre-mRNA splicing. May have a role in the recognition of the 3' splice site during the second step of splicing. In Rattus norvegicus (Rat), this protein is Serine/Arginine-related protein 53 (Rsrc1).